The chain runs to 585 residues: Nucleus accumbens-associated protein 2 (585 aa).

Residues 30-94 (CDVSIVVKGQ…CYTGKLTMAA (65 aa)) form the BTB domain. Residues Lys171 and Lys215 each participate in a glycyl lysine isopeptide (Lys-Gly) (interchain with G-Cter in SUMO2) cross-link. The span at 238–261 (PYPQGERTSPGASSLPTTDSSTSY) shows a compositional bias: polar residues. Positions 238–269 (PYPQGERTSPGASSLPTTDSSTSYHNEDEDDD) are disordered. Glycyl lysine isopeptide (Lys-Gly) (interchain with G-Cter in SUMO2) cross-links involve residues Lys296, Lys426, and Lys453. Positions 348-445 (GSGVYITRGQ…DMCTNARRVR (98 aa)) constitute a BEN domain. A disordered region spans residues 541–585 (APEQLPADGQSSPQAFEQGNTSSSRPQTPVATATRRPEGTYAGTL). A compositionally biased stretch (polar residues) spans 549–571 (GQSSPQAFEQGNTSSSRPQTPVA).

Homooligomer; mediated by the BTB domain. Interacts with the NuRD complex. Interacts (via C-terminal part) with HDAC2. Interacts (via BTB domain) with MTA1, MTA2 and MTA3.

Its subcellular location is the nucleus. In terms of biological role, functions as a transcriptional repressor through its association with the NuRD complex. Recruits the NuRD complex to the promoter of MDM2, leading to the repression of MDM2 transcription and subsequent stability of p53/TP53. This Rattus norvegicus (Rat) protein is Nucleus accumbens-associated protein 2 (Nacc2).